The chain runs to 116 residues: NADH-ubiquinone oxidoreductase chain 3 (116 aa).

Transmembrane regions (helical) follow at residues 4–24, 56–76, and 88–108; these read LIIT…IAFW, FFLV…LLPL, and TLIL…YEWI.

It belongs to the complex I subunit 3 family. As to quaternary structure, core subunit of respiratory chain NADH dehydrogenase (Complex I) which is composed of 45 different subunits. Interacts with TMEM186. Interacts with TMEM242.

Its subcellular location is the mitochondrion inner membrane. It carries out the reaction a ubiquinone + NADH + 5 H(+)(in) = a ubiquinol + NAD(+) + 4 H(+)(out). Functionally, core subunit of the mitochondrial membrane respiratory chain NADH dehydrogenase (Complex I) which catalyzes electron transfer from NADH through the respiratory chain, using ubiquinone as an electron acceptor. Essential for the catalytic activity of complex I. The protein is NADH-ubiquinone oxidoreductase chain 3 of Didelphis virginiana (North American opossum).